A 447-amino-acid polypeptide reads, in one-letter code: ATP-dependent protease ATPase subunit HslU (447 aa).

ATP-binding positions include Ile18, 60–65, Asp259, Glu325, and Arg397; that span reads GVGKTE.

This sequence belongs to the ClpX chaperone family. HslU subfamily. As to quaternary structure, a double ring-shaped homohexamer of HslV is capped on each side by a ring-shaped HslU homohexamer. The assembly of the HslU/HslV complex is dependent on binding of ATP.

The protein resides in the cytoplasm. ATPase subunit of a proteasome-like degradation complex; this subunit has chaperone activity. The binding of ATP and its subsequent hydrolysis by HslU are essential for unfolding of protein substrates subsequently hydrolyzed by HslV. HslU recognizes the N-terminal part of its protein substrates and unfolds these before they are guided to HslV for hydrolysis. This chain is ATP-dependent protease ATPase subunit HslU, found in Burkholderia ambifaria (strain ATCC BAA-244 / DSM 16087 / CCUG 44356 / LMG 19182 / AMMD) (Burkholderia cepacia (strain AMMD)).